The following is a 915-amino-acid chain: Probable serine/threonine-protein kinase dyrk2 (915 aa).

4 stretches are compositionally biased toward low complexity: residues 51 to 79 (TSNTTPSNNNNNNNTTTTITTTTTTPTIS), 108 to 119 (SSSKSSSNSSSI), 170 to 185 (SSSSTSSSSSSSSTTS), and 196 to 218 (SSNSGSSSSGGNNNNSDDNSGSS). Disordered stretches follow at residues 51 to 119 (TSNT…SSSI), 132 to 334 (FSSS…SKSS), and 349 to 533 (AIKS…PTKS). Over residues 234–260 (PSHTISDSPRSSTMKSRSVSISNGSLF) the composition is skewed to polar residues. Low complexity-rich tracts occupy residues 261-287 (SPTNTSVNNSNNNTSSNIKTPTKSSIS), 300-333 (SSSTTKTPTATTTTTTTTTSSSSSTSTNTTPSKS), 352-364 (SRSLSVSASLARV), 379-391 (SSSSSSSSSSFSS), 399-425 (SSSKTPTPTSSNTTVQPSTTSLSASKI), and 433-533 (SLSS…PTKS). A Protein kinase domain is found at 605-902 (FEIVSILGQG…AEQGLKHDWI (298 aa)). Residues 611–619 (LGQGSFCQV) and Lys-634 contribute to the ATP site. The active-site Proton acceptor is Asp-731.

It belongs to the protein kinase superfamily. CMGC Ser/Thr protein kinase family. MNB/DYRK subfamily.

The enzyme catalyses L-seryl-[protein] + ATP = O-phospho-L-seryl-[protein] + ADP + H(+). It carries out the reaction L-threonyl-[protein] + ATP = O-phospho-L-threonyl-[protein] + ADP + H(+). The catalysed reaction is L-tyrosyl-[protein] + ATP = O-phospho-L-tyrosyl-[protein] + ADP + H(+). The polypeptide is Probable serine/threonine-protein kinase dyrk2 (dyrk2) (Dictyostelium discoideum (Social amoeba)).